Here is a 397-residue protein sequence, read N- to C-terminus: Acetate kinase (397 aa).

N8 contributes to the Mg(2+) binding site. K15 is an ATP binding site. Position 89 (R89) interacts with substrate. D146 (proton donor/acceptor) is an active-site residue. Residues 206–210, 281–283, and 329–333 contribute to the ATP site; these read HLGNG, DLR, and GVGEN. E382 lines the Mg(2+) pocket.

It belongs to the acetokinase family. In terms of assembly, homodimer. Requires Mg(2+) as cofactor. The cofactor is Mn(2+).

The protein resides in the cytoplasm. The catalysed reaction is acetate + ATP = acetyl phosphate + ADP. It participates in metabolic intermediate biosynthesis; acetyl-CoA biosynthesis; acetyl-CoA from acetate: step 1/2. Functionally, catalyzes the formation of acetyl phosphate from acetate and ATP. Can also catalyze the reverse reaction. The sequence is that of Acetate kinase from Bacillus cereus (strain ATCC 10987 / NRS 248).